The chain runs to 1233 residues: uncharacterized protein (1233 aa).

Disordered stretches follow at residues 32–51 (SETS…TPKP), 510–529 (ATTN…PVPD), and 882–915 (EVIE…IERS). Composition is skewed to acidic residues over residues 513–529 (NEEE…PVPD) and 882–905 (EVIE…EDEG). Positions 906–915 (DNKQRVIERS) are enriched in basic and acidic residues.

This is an uncharacterized protein from Dictyostelium discoideum (Social amoeba).